Here is a 385-residue protein sequence, read N- to C-terminus: m7GpppN-mRNA hydrolase (385 aa).

The Nudix hydrolase domain maps to 95–226; it reads MGVPTYGAII…KLGLAPNKFF (132 aa). Residues 129–150 carry the Nudix box motif; that stretch reads GKVNKEEAPHDCAAREVFEETG. Positions 144 and 148 each coordinate Mn(2+). 5 positions are modified to phosphoserine: serine 246, serine 247, serine 249, serine 276, and serine 284. The disordered stretch occupies residues 247–266; sequence SDSDNGFSSTGSTPAKPTVE. A compositionally biased stretch (low complexity) spans 249–259; sequence SDNGFSSTGST.

The protein belongs to the Nudix hydrolase family. DCP2 subfamily. In terms of assembly, found in a mRNA decay complex with LSM1, LSM3, LSM4, EXOSC2, EXOSC4, EXOSC10, PARN, XRN1, CNOT6, UPF1, UPF2 and UPF3B. Forms a complex with DCP1A, EDC3, DDX6 and EDC4/HEDLS, within this complex directly interacts with EDC4/HEDLS. Interacts with DPC1B, UPF1, UPF2 and UPF3B. Associates with polysomes. Interacts (via N-terminus and C-terminus) with TRIM21 (via N-terminus and C-terminus). Interacts with LIMD1, WTIP and AJUBA. Interacts with DDX17 in an RNA-dependent manner. Interacts with ZC3HAV1. Interacts with APOBEC3G in an RNA-dependent manner. Interacts with ZFP36L1 (via N-terminus). Interacts with NBDY. Requires Mn(2+) as cofactor. It depends on Mg(2+) as a cofactor.

Its subcellular location is the cytoplasm. It localises to the P-body. It is found in the nucleus. The enzyme catalyses a 5'-end (N(7)-methyl 5'-triphosphoguanosine)-ribonucleoside in mRNA + H2O = N(7)-methyl-GDP + a 5'-end phospho-ribonucleoside in mRNA + 2 H(+). Its function is as follows. Decapping metalloenzyme that catalyzes the cleavage of the cap structure on mRNAs. Removes the 7-methyl guanine cap structure from mRNA molecules, yielding a 5'-phosphorylated mRNA fragment and 7m-GDP. Necessary for the degradation of mRNAs, both in normal mRNA turnover and in nonsense-mediated mRNA decay. Plays a role in replication-dependent histone mRNA degradation. Has higher activity towards mRNAs that lack a poly(A) tail. Has no activity towards a cap structure lacking an RNA moiety. The presence of a N(6)-methyladenosine methylation at the second transcribed position of mRNAs (N(6),2'-O-dimethyladenosine cap; m6A(m)) provides resistance to DCP2-mediated decapping. Blocks autophagy in nutrient-rich conditions by repressing the expression of ATG-related genes through degradation of their transcripts. This is m7GpppN-mRNA hydrolase (DCP2) from Pongo abelii (Sumatran orangutan).